Consider the following 390-residue polypeptide: Cystathionine beta-lyase (390 aa).

Lys-202 is modified (N6-(pyridoxal phosphate)lysine).

The protein belongs to the trans-sulfuration enzymes family. Pyridoxal 5'-phosphate serves as cofactor.

Its subcellular location is the cytoplasm. It localises to the nucleus. It carries out the reaction L,L-cystathionine + H2O = L-homocysteine + pyruvate + NH4(+). The enzyme catalyses an S-substituted L-cysteine + H2O = a thiol + pyruvate + NH4(+). Its pathway is amino-acid biosynthesis; L-methionine biosynthesis via de novo pathway; L-homocysteine from L-cystathionine: step 1/1. The sequence is that of Cystathionine beta-lyase (str3) from Schizosaccharomyces pombe (strain 972 / ATCC 24843) (Fission yeast).